The sequence spans 258 residues: Small ribosomal subunit protein mS40 (258 aa).

A mitochondrion-targeting transit peptide spans 1 to 35; that stretch reads MAASILNVLLRRLPGVSPFRGAYGVQVLLQTLCTK. Phosphoserine is present on Ser49. Residues 223-258 are disordered; sequence RLREESGPPPELMPEVPLTAPAEASSTEPGAPQSAL.

It belongs to the bacterial ribosomal protein bS18 family. Mitochondrion-specific ribosomal protein mS40 subfamily. As to quaternary structure, component of the mitochondrial ribosome small subunit (28S) which comprises a 12S rRNA and about 30 distinct proteins.

It localises to the mitochondrion. This chain is Small ribosomal subunit protein mS40 (MRPS18B), found in Sus scrofa (Pig).